Reading from the N-terminus, the 155-residue chain is Ribosome maturation factor RimP (155 aa).

The protein belongs to the RimP family.

It is found in the cytoplasm. Functionally, required for maturation of 30S ribosomal subunits. The chain is Ribosome maturation factor RimP from Desulforapulum autotrophicum (strain ATCC 43914 / DSM 3382 / VKM B-1955 / HRM2) (Desulfobacterium autotrophicum).